A 401-amino-acid polypeptide reads, in one-letter code: MTLITDIRLRRVLDSRGNATVEADVLTESGGFGRGKAPSGASTGEYEAIELPANEAIAKAREEALPRLIGEVHAGNQRDVDAALHAADGTDDFSGIGANSAVAISMAAAKAGADVLGAPLYQHLGGTFRGNEYPTPLGNIIGGGEHAADATNIQEFLAAPVGAPSVEEAVFANAAVHQEVHDILADRDLPAGKGDEGAWAPSVSDDEAFEIMDEAVETVADDFGFAISFGLDVAGAELYDDEADGYVYDDGVKSTEEQIEYIAGKVEEYDLVYVEDPLDENDYEAFADLTAQVGDQTLVCGDDLFVTNVERLQAGINADAGNSILIKPNQIGTLTDAVDAIELATASGYESVVSHRSGETEDTTIAHLAVATDAPFIKTGAVGGERTAKLNELIRIEDNAV.

Q154 contacts (2R)-2-phosphoglycerate. E196 (proton donor) is an active-site residue. 3 residues coordinate Mg(2+): D232, E275, and D302. Residues K327, R356, S357, and K378 each contribute to the (2R)-2-phosphoglycerate site. Residue K327 is the Proton acceptor of the active site.

It belongs to the enolase family. Mg(2+) is required as a cofactor.

The protein resides in the cytoplasm. It localises to the secreted. The protein localises to the cell surface. The catalysed reaction is (2R)-2-phosphoglycerate = phosphoenolpyruvate + H2O. It functions in the pathway carbohydrate degradation; glycolysis; pyruvate from D-glyceraldehyde 3-phosphate: step 4/5. Its function is as follows. Catalyzes the reversible conversion of 2-phosphoglycerate (2-PG) into phosphoenolpyruvate (PEP). It is essential for the degradation of carbohydrates via glycolysis. The polypeptide is Enolase (Haloarcula marismortui (strain ATCC 43049 / DSM 3752 / JCM 8966 / VKM B-1809) (Halobacterium marismortui)).